Consider the following 1851-residue polypeptide: Protein lap4 (1851 aa).

LRR repeat units lie at residues 38–59 (TLEE…FFRL), 61–82 (RLRK…IQNF), 84–105 (NLVE…IKHL), 107–128 (SLQV…FSQL), 130–152 (NLTV…GSLT), 153–174 (QLES…ISQL), 176–197 (KLKR…LGYL), 199–220 (GLHE…LGLL), 222–243 (KLTY…ISGL), 245–267 (SLTD…AKLS), 268–289 (RLTI…LGNC), 291–312 (NMQE…IGQM), 314–335 (KLNN…IGQC), 337–358 (NLGV…LGNC), 360–382 (VLHV…VNLQ), and 383–403 (LKAV…QPDT). Disordered stretches follow at residues 427–474 (PARD…KDLK), 584–641 (VGGS…VQHL), and 656–719 (SQER…PDNL). 2 positions are modified to phosphoserine: serine 433 and serine 435. Positions 438 to 461 (FEEREPSRTVVKFSEEATQEKETP) are enriched in basic and acidic residues. The stretch at 471–492 (KDLKAKAQKLKVERSRNEEHAN) forms a coiled coil. The segment covering 589–601 (EVQDDDEQEDEFE) has biased composition (acidic residues). Positions 620-639 (RPPKLHRRDTPHHLKNKRVQ) are enriched in basic residues. Polar residues predominate over residues 656 to 672 (SQERNDTTPQHSLSGKV). Residues 676–686 (IEEEEQLEVEQ) are compositionally biased toward acidic residues. The stretch at 677–693 (EEEEQLEVEQEQQQQQQ) forms a coiled coil. 3 positions are modified to phosphoserine: serine 700, serine 702, and serine 705. One can recognise a PDZ 1 domain in the interval 731–818 (EIHIERTAAG…VLVLVVQREV (88 aa)). Phosphoserine occurs at positions 834 and 837. A PDZ 2 domain is found at 929–1019 (HTTLIRDQIG…FVRLVLQREY (91 aa)). Phosphoserine occurs at positions 1031 and 1041. A disordered region spans residues 1067–1150 (LATTTPTPKP…EAQPSSLRPL (84 aa)). Composition is skewed to polar residues over residues 1080–1097 (ASIS…TNGF) and 1132–1149 (GSTT…SLRP). 2 PDZ domains span residues 1239-1329 (EVVL…QHDP) and 1336-1428 (EVLL…CKGY). Residues 1448–1467 (NSSASCSGGSRQGSRASETG) are compositionally biased toward polar residues. Residues 1448-1485 (NSSASCSGGSRQGSRASETGSELSQSQSVSSLDHEEDE) are disordered. Residues 1468 to 1478 (SELSQSQSVSS) show a composition bias toward low complexity. Phosphoserine is present on residues serine 1475, serine 1477, and serine 1478. Threonine 1599 is modified (phosphothreonine). Residues 1647-1669 (AESANSAGAPSPAVPASTPGSAP) are compositionally biased toward low complexity. Disordered regions lie at residues 1647-1751 (AESA…KVFS) and 1772-1851 (LRRD…VFRS). Positions 1725 to 1751 (VSDKKRFFESAMEDQHKPTQKTDKVFS) are enriched in basic and acidic residues. Residues 1753 to 1790 (LSKDEVEKLRQEEERKIATLRRDKNSRLLDAANDNIDK) are a coiled coil. Over residues 1807 to 1816 (DDNDDSDQEE) the composition is skewed to acidic residues. Over residues 1831–1851 (HFDDAEDMRNPLDEIEAVFRS) the composition is skewed to basic and acidic residues.

It belongs to the LAP (LRR and PDZ) protein family. In terms of tissue distribution, during germ band extension, expression of isoform A occurs predominantly in neuroblasts derived from the neuro-ectoderm and later is restricted to CNS neurons and pole cells. Isoform C is strongly expressed in PNS and a subset of CNS neurons. In the adult, expressed in third antennal segment and maxillary palps, major olfactory organs and in Johnstons organ in the second antennal segment. Expression is also observed in cortical regions of the brain. Isoforms expressed in epithelia are coexpressed with dlg1 throughout development.

The protein resides in the cytoplasm. It localises to the apicolateral cell membrane. Its subcellular location is the cell junction. It is found in the septate junction. Required for polarization of the embryonic, imaginal disk and follicular epithelia. Specifically restricts apical membrane determinants to the apical cell surface; acts to exclude crb from the basolateral domain and define adherens junction position. Regulates cellular growth and differentiation; acts as a tumor suppressor. Essential for odor guided behavior. This chain is Protein lap4, found in Drosophila melanogaster (Fruit fly).